The chain runs to 443 residues: 26S proteasome regulatory subunit rpn501 (443 aa).

S209 carries the post-translational modification Phosphoserine. The 173-residue stretch at 230–402 (DVCKYYRAVY…QVISFKKSQN (173 aa)) folds into the PCI domain.

Belongs to the proteasome subunit p55 family.

It localises to the nucleus. In terms of biological role, acts as a regulatory subunit of the 26S proteasome which is involved in the ATP-dependent degradation of ubiquitinated proteins. Required for proper proteasome assembly. In Schizosaccharomyces pombe (strain 972 / ATCC 24843) (Fission yeast), this protein is 26S proteasome regulatory subunit rpn501 (rpn501).